The chain runs to 228 residues: Cytochrome b6-f complex iron-sulfur subunit 1, chloroplastic (228 aa).

The transit peptide at Met-1–Met-49 directs the protein to the chloroplast. Residues Leu-72–Val-92 form a helical membrane-spanning segment. The Rieske domain maps to Ala-115–Phe-211. [2Fe-2S] cluster is bound by residues Cys-157, His-159, Cys-175, and His-178. An intrachain disulfide couples Cys-162 to Cys-177.

It belongs to the Rieske iron-sulfur protein family. The 4 large subunits of the cytochrome b6-f complex are cytochrome b6, subunit IV (17 kDa polypeptide, petD), cytochrome f and the Rieske protein, while the 4 small subunits are petG, petL, petM and petN. The complex functions as a dimer. It depends on [2Fe-2S] cluster as a cofactor.

It is found in the plastid. The protein localises to the chloroplast thylakoid membrane. The enzyme catalyses 2 oxidized [plastocyanin] + a plastoquinol + 2 H(+)(in) = 2 reduced [plastocyanin] + a plastoquinone + 4 H(+)(out). Its function is as follows. Component of the cytochrome b6-f complex, which mediates electron transfer between photosystem II (PSII) and photosystem I (PSI), cyclic electron flow around PSI, and state transitions. The polypeptide is Cytochrome b6-f complex iron-sulfur subunit 1, chloroplastic (petC1) (Nicotiana tabacum (Common tobacco)).